The following is a 1247-amino-acid chain: Probable phosphorylase b kinase regulatory subunit alpha (1247 aa).

The segment at 853–883 is calmodulin-binding; that stretch reads LKGLYEKACQQKLWGLVRHTAGMLGKRVEDL. Phosphoserine occurs at positions 1030 and 1033. Residues 1052-1089 are calmodulin-binding; sequence DRQGQWLRRRRLDGALNRVPRDFYSRVWTVLEKCQGLA. Cys1244 carries the S-farnesyl cysteine lipid modification.

Belongs to the phosphorylase b kinase regulatory chain family. Post-translationally, although the final Cys may be farnesylated, the terminal tripeptide is probably not removed, and the C-terminus is not methylated.

The protein localises to the cell membrane. It participates in glycan biosynthesis; glycogen metabolism. Its function is as follows. Phosphorylase b kinase catalyzes the phosphorylation of serine in certain substrates, including troponin I. The alpha chain may bind calmodulin. This is Probable phosphorylase b kinase regulatory subunit alpha from Drosophila melanogaster (Fruit fly).